Reading from the N-terminus, the 221-residue chain is High frequency lysogenization protein HflD homolog (221 aa).

This sequence belongs to the HflD family.

Its subcellular location is the cytoplasm. It is found in the cell inner membrane. This chain is High frequency lysogenization protein HflD homolog, found in Acidithiobacillus ferrooxidans (strain ATCC 23270 / DSM 14882 / CIP 104768 / NCIMB 8455) (Ferrobacillus ferrooxidans (strain ATCC 23270)).